The sequence spans 99 residues: NADH-quinone oxidoreductase subunit K (99 aa).

The next 3 membrane-spanning stretches (helical) occupy residues 3–23, 28–48, and 59–79; these read PINYLYLSALLFTIGAAGVLL, IVMFMCVELMLNAVNLAFVTF, and MIAFFTMVVAACEVVIGLAII.

Belongs to the complex I subunit 4L family. NDH-1 is composed of 14 different subunits. Subunits NuoA, H, J, K, L, M, N constitute the membrane sector of the complex.

Its subcellular location is the cell membrane. It carries out the reaction a quinone + NADH + 5 H(+)(in) = a quinol + NAD(+) + 4 H(+)(out). NDH-1 shuttles electrons from NADH, via FMN and iron-sulfur (Fe-S) centers, to quinones in the respiratory chain. The immediate electron acceptor for the enzyme in this species is believed to be a menaquinone. Couples the redox reaction to proton translocation (for every two electrons transferred, four hydrogen ions are translocated across the cytoplasmic membrane), and thus conserves the redox energy in a proton gradient. The polypeptide is NADH-quinone oxidoreductase subunit K (Mycobacterium avium (strain 104)).